A 614-amino-acid polypeptide reads, in one-letter code: UvrABC system protein C (614 aa).

Residues 26-104 (NLPGVYKMLG…IKEYRPPYNV (79 aa)) form the GIY-YIG domain. Residues 215-250 (SDIHSALIEKMEASAEELDFEKAVFYRDQLSMLREV) form the UVR domain.

This sequence belongs to the UvrC family. In terms of assembly, interacts with UvrB in an incision complex.

It is found in the cytoplasm. Functionally, the UvrABC repair system catalyzes the recognition and processing of DNA lesions. UvrC both incises the 5' and 3' sides of the lesion. The N-terminal half is responsible for the 3' incision and the C-terminal half is responsible for the 5' incision. This Psychrobacter arcticus (strain DSM 17307 / VKM B-2377 / 273-4) protein is UvrABC system protein C.